A 297-amino-acid chain; its full sequence is Large ribosomal subunit protein uL18 (297 aa).

G2 is modified (N-acetylglycine). N6-acetyllysine is present on residues K5 and K48. S185 carries the post-translational modification Phosphoserine. K220 carries the N6-acetyllysine; alternate modification. K220 participates in a covalent cross-link: Glycyl lysine isopeptide (Lys-Gly) (interchain with G-Cter in SUMO1); alternate. K220 is covalently cross-linked (Glycyl lysine isopeptide (Lys-Gly) (interchain with G-Cter in SUMO2); alternate). T232 carries the phosphothreonine modification. Residues 252–297 (VYEKKPKKEVKKKRWNRPKMSLAQKKDRVAQKKASFLRAQERAAES) are disordered. Basic residues predominate over residues 258–268 (KKEVKKKRWNR). Residue S272 is modified to Phosphoserine.

This sequence belongs to the universal ribosomal protein uL18 family. In terms of assembly, component of the large ribosomal subunit (LSU). Part of the 5S RNP complex, which is a LSU subcomplex composed of the 5S RNA, RPL5 and RPL11. Component of a hexameric 5S RNP precursor complex, composed of 5S RNA, RRS1, RPF2/BXDC1, RPL5, RPL11 and HEATR3; this complex acts as a precursor for ribosome assembly. Interacts with NVL in an ATP-dependent manner. Interacts with RRP1B. Interacts with IPO5, IPO7 and KPNB1; these interactions may be involved in RPL5 nuclear import for the assembly of ribosomal subunits.

The protein localises to the cytoplasm. The protein resides in the nucleus. Its subcellular location is the nucleolus. Component of the ribosome, a large ribonucleoprotein complex responsible for the synthesis of proteins in the cell. The small ribosomal subunit (SSU) binds messenger RNAs (mRNAs) and translates the encoded message by selecting cognate aminoacyl-transfer RNA (tRNA) molecules. The large subunit (LSU) contains the ribosomal catalytic site termed the peptidyl transferase center (PTC), which catalyzes the formation of peptide bonds, thereby polymerizing the amino acids delivered by tRNAs into a polypeptide chain. The nascent polypeptides leave the ribosome through a tunnel in the LSU and interact with protein factors that function in enzymatic processing, targeting, and the membrane insertion of nascent chains at the exit of the ribosomal tunnel. As part of the 5S RNP/5S ribonucleoprotein particle it is an essential component of the LSU, required for its formation and the maturation of rRNAs. It also couples ribosome biogenesis to p53/TP53 activation. As part of the 5S RNP it accumulates in the nucleoplasm and inhibits MDM2, when ribosome biogenesis is perturbed, mediating the stabilization and the activation of TP53. This chain is Large ribosomal subunit protein uL18 (RPL5), found in Bos taurus (Bovine).